The following is a 393-amino-acid chain: Protein TBATA (393 aa).

Disordered stretches follow at residues 1–39 (MTTE…VGLQ), 168–188 (VPIG…DTWR), 202–264 (TKEI…DGGV), and 340–393 (EPQE…KAES). Residues 20–34 (PQPETKPENLPRSHG) show a composition bias toward basic and acidic residues. Residues 173-185 (PQSNRNPQLSTSD) show a composition bias toward polar residues. 2 stretches are compositionally biased toward basic and acidic residues: residues 205–227 (IQPK…REQG) and 380–393 (PSED…KAES).

It belongs to the TBATA family. As to quaternary structure, interacts with KIF17. Interacts with UBA3. In terms of tissue distribution, expressed in the subcapsular region of the thymus and lymph node (at protein level). Highly expressed in thymic cortical stromal cells and testis. Lower levels found in brain cortex, hippocampus, kidney, cerebellum, skeletal muscle, epididymis and ovary. No expression detected in other lymphoid organs including bone marrow and spleen. Isoform 1 and isoform 2 are expressed predominantly in testis. Isoform 3, isoform 4 and isoform 5 are expressed predominantly in thymus although isoform 3 is also expressed in testis. In the CNS, highly expressed in restricted areas, the cerebellum and hippocampus.

It is found in the cytoplasm. It localises to the cytosol. The protein resides in the nucleus. In terms of biological role, isoform 1 and isoform 2 may play a role in spermatid differentiation. Isoform 1 and isoform 2 regulate thymus function by modulating stromal cell proliferation via interference with the NEDD8 pathway. The sequence is that of Protein TBATA (Tbata) from Mus musculus (Mouse).